We begin with the raw amino-acid sequence, 197 residues long: Nucleoside triphosphate pyrophosphatase (197 aa).

The active-site Proton acceptor is aspartate 70.

The protein belongs to the Maf family. It depends on a divalent metal cation as a cofactor.

It is found in the cytoplasm. It catalyses the reaction a ribonucleoside 5'-triphosphate + H2O = a ribonucleoside 5'-phosphate + diphosphate + H(+). It carries out the reaction a 2'-deoxyribonucleoside 5'-triphosphate + H2O = a 2'-deoxyribonucleoside 5'-phosphate + diphosphate + H(+). Functionally, nucleoside triphosphate pyrophosphatase. May have a dual role in cell division arrest and in preventing the incorporation of modified nucleotides into cellular nucleic acids. The sequence is that of Nucleoside triphosphate pyrophosphatase (yhdE) from Shigella flexneri.